The sequence spans 82 residues: Small ribosomal subunit protein bS16 (82 aa).

It belongs to the bacterial ribosomal protein bS16 family.

In Vibrio campbellii (strain ATCC BAA-1116), this protein is Small ribosomal subunit protein bS16.